A 412-amino-acid polypeptide reads, in one-letter code: Gamma-glutamyl phosphate reductase (412 aa).

It belongs to the gamma-glutamyl phosphate reductase family.

The protein localises to the cytoplasm. It carries out the reaction L-glutamate 5-semialdehyde + phosphate + NADP(+) = L-glutamyl 5-phosphate + NADPH + H(+). The protein operates within amino-acid biosynthesis; L-proline biosynthesis; L-glutamate 5-semialdehyde from L-glutamate: step 2/2. In terms of biological role, catalyzes the NADPH-dependent reduction of L-glutamate 5-phosphate into L-glutamate 5-semialdehyde and phosphate. The product spontaneously undergoes cyclization to form 1-pyrroline-5-carboxylate. The chain is Gamma-glutamyl phosphate reductase from Lactiplantibacillus plantarum (strain ATCC BAA-793 / NCIMB 8826 / WCFS1) (Lactobacillus plantarum).